The chain runs to 117 residues: Large ribosomal subunit protein bL20c (117 aa).

It belongs to the bacterial ribosomal protein bL20 family.

It is found in the plastid. The protein localises to the chloroplast. Functionally, binds directly to 23S ribosomal RNA and is necessary for the in vitro assembly process of the 50S ribosomal subunit. It is not involved in the protein synthesizing functions of that subunit. This Barbarea verna (Land cress) protein is Large ribosomal subunit protein bL20c.